Here is a 151-residue protein sequence, read N- to C-terminus: Phospholipase A2 inhibitor BjussuMIP (151 aa).

Residues 1-4 form the signal peptide; the sequence is LANG. The region spanning 31-146 is the C-type lectin domain; that stretch reads LKYAFLTVHK…CDENLLVVCE (116 aa). Intrachain disulfides connect Cys-68-Cys-145 and Cys-123-Cys-137. The N-linked (GlcNAc...) asparagine glycan is linked to Asn-107.

The protein belongs to the alpha-type phospholipase A2 inhibitor family. Oligomer. Expressed by the liver.

Its subcellular location is the secreted. Functionally, inhibits enzymatic, anticoagulant, edema formation, myotoxicity activities induced by snakes phospholipase A2. Is oligomeric, but it is probable that each of its subunits can bind and inactive a PLA2 molecule. The protein is Phospholipase A2 inhibitor BjussuMIP of Bothrops jararacussu (Jararacussu).